Here is an 88-residue protein sequence, read N- to C-terminus: Cell division topological specificity factor (88 aa).

Belongs to the MinE family.

Prevents the cell division inhibition by proteins MinC and MinD at internal division sites while permitting inhibition at polar sites. This ensures cell division at the proper site by restricting the formation of a division septum at the midpoint of the long axis of the cell. The sequence is that of Cell division topological specificity factor from Pseudoalteromonas translucida (strain TAC 125).